A 392-amino-acid chain; its full sequence is DNA-directed RNA polymerase subunit Rpo1C (392 aa).

The protein belongs to the RNA polymerase beta' chain family. In terms of assembly, part of the 13-subunit RNA polymerase complex.

Its subcellular location is the cytoplasm. It catalyses the reaction RNA(n) + a ribonucleoside 5'-triphosphate = RNA(n+1) + diphosphate. In terms of biological role, DNA-dependent RNA polymerase (RNAP) catalyzes the transcription of DNA into RNA using the four ribonucleoside triphosphates as substrates. Forms part of the jaw domain. The chain is DNA-directed RNA polymerase subunit Rpo1C from Saccharolobus solfataricus (strain ATCC 35092 / DSM 1617 / JCM 11322 / P2) (Sulfolobus solfataricus).